The chain runs to 73 residues: Large ribosomal subunit protein bL28 (73 aa).

This sequence belongs to the bacterial ribosomal protein bL28 family.

The protein is Large ribosomal subunit protein bL28 of Buchnera aphidicola subsp. Cinara cedri (strain Cc).